A 1109-amino-acid chain; its full sequence is MESKACESKNEDLLPSGITSKGGSSSPFFVTSTHGTIIENTSSTGTLTQMPFFPKYEVELDSPRKSTPYPGKEHIERVLEEYSHQVKDLQRRLNESNELHEKQKFYLRQSVIDLQTKLQEMQMERDAMADIRRRESQSQEESRNQLQNTVRELEAAKCLKEDMLKDSSTQIEQLRKMMLSHEGVLQEIRSILVDFEEASGKKICEHDSMSTMHFRSLGSAISKILRELDTEISFLKGRIFPVEDQLETLKSESQNKIELLLQQHQDRIEQLISEHEVEITGLTEKASSARSQANSVQSQLEIIQEQARNQNSMYMRQLSDLESTVSQLRSELRESKRMYEDKIEELEKQLVLANSELTEARTERDQFSQESGNLDDQLQKLLADLHKREKELSLEKEQNKRLWDRDTGNSITIDHLRRELDDRNMEVQRLEALLKAMKSECQGQMERQMAAIQGKNESLEKVSSLTAQLESTKEMLRKVVEELTAKKMNLESSERTVSDLTASLQEKERAIEATNAEITKLRSRVDLKLQELQHLKNEGDHLRNVQTECEALKLQMAEKDKVIEILRQQIENMTQLVGQHGRTAGAMQVEKAQLEKEINDRKLELQEFKILKDKKDAKIRELEARVSDLELEKVKLVNAGSERLRAVKDIRHERDQLLNEVKTSRTELNHLSEDYEVLKRNFRNKSEEMESTTNRLKMQLKSAQSELEQTRNTLKTMEGSDGHAMKVAMGMQKQITAKRGQIDALQSKVQFLEEAVTSANKERHFLKEEKSKLSQELSTVATEKNKMAGELEVLRSQERRLKEKVANMEVALDKFAECQDIIQRQEQESVRLKLQHTLDVKELQGPGYTSNSSVKPRLLQPASVTRSHSNIPSSQSTTSFLSHHSIKTNTPKEDPTRDLKQLLQELRTVINEEPAMALSKTEEDGRTPSLGALEDRVRDCITESSLRAELCHRSNNSLRESTEGSKSSETLSREPVPLHPGDLEDPSSCFTFTSTASPSGKMSASRSFSSSPKKSPVHSLLTSSAEESVNSTPQYRSTKPIHSPTSAKDSQSPSLETTGKTCQKLQNRLESLQTLVEDLQLKNQAMSSMIRNQEKRIQKVKDQEKMLLK.

The segment covering 1–12 (MESKACESKNED) has biased composition (basic and acidic residues). The tract at residues 1 to 31 (MESKACESKNEDLLPSGITSKGGSSSPFFVT) is disordered. A compositionally biased stretch (polar residues) spans 17–31 (GITSKGGSSSPFFVT). Coiled-coil stretches lie at residues 71-166 (GKEH…MLKD) and 242-828 (VEDQ…QEQE). Disordered regions lie at residues 843–897 (LQGP…DPTR) and 952–1061 (HRSN…TGKT). Polar residues-rich tracts occupy residues 862-882 (ASVT…SFLS), 953-970 (RSNN…SSET), and 988-998 (SCFTFTSTASP). The span at 999–1019 (SGKMSASRSFSSSPKKSPVHS) shows a compositional bias: low complexity. Polar residues-rich tracts occupy residues 1020–1037 (LLTS…QYRS) and 1043–1061 (SPTS…TGKT). A coiled-coil region spans residues 1053 to 1109 (PSLETTGKTCQKLQNRLESLQTLVEDLQLKNQAMSSMIRNQEKRIQKVKDQEKMLLK).

This is Coiled-coil domain-containing protein 158 (Ccdc158) from Mus musculus (Mouse).